The following is a 269-amino-acid chain: Formamidopyrimidine-DNA glycosylase (269 aa).

Residue proline 2 is the Schiff-base intermediate with DNA of the active site. The Proton donor role is filled by glutamate 3. Residue lysine 57 is the Proton donor; for beta-elimination activity of the active site. DNA-binding residues include histidine 90, arginine 109, and lysine 150. The segment at 235–269 (QVYGRAGELCRRCGNVIEIAKHGQRSTFFCRHCQH) adopts an FPG-type zinc-finger fold. The active-site Proton donor; for delta-elimination activity is the arginine 259.

It belongs to the FPG family. In terms of assembly, monomer. Zn(2+) is required as a cofactor.

The enzyme catalyses Hydrolysis of DNA containing ring-opened 7-methylguanine residues, releasing 2,6-diamino-4-hydroxy-5-(N-methyl)formamidopyrimidine.. It catalyses the reaction 2'-deoxyribonucleotide-(2'-deoxyribose 5'-phosphate)-2'-deoxyribonucleotide-DNA = a 3'-end 2'-deoxyribonucleotide-(2,3-dehydro-2,3-deoxyribose 5'-phosphate)-DNA + a 5'-end 5'-phospho-2'-deoxyribonucleoside-DNA + H(+). Involved in base excision repair of DNA damaged by oxidation or by mutagenic agents. Acts as a DNA glycosylase that recognizes and removes damaged bases. Has a preference for oxidized purines, such as 7,8-dihydro-8-oxoguanine (8-oxoG). Has AP (apurinic/apyrimidinic) lyase activity and introduces nicks in the DNA strand. Cleaves the DNA backbone by beta-delta elimination to generate a single-strand break at the site of the removed base with both 3'- and 5'-phosphates. This Yersinia enterocolitica serotype O:8 / biotype 1B (strain NCTC 13174 / 8081) protein is Formamidopyrimidine-DNA glycosylase.